Here is a 386-residue protein sequence, read N- to C-terminus: Chorismate synthase (386 aa).

Residues 32–60 (LPLSEDDVQRELDRRRPGQSGVSTPRSER) are disordered. Basic and acidic residues predominate over residues 38 to 47 (DVQRELDRRR). R46 contacts NADP(+). FMN is bound by residues 123–125 (RAS), G290, 305–309 (KPTPS), and R332.

It belongs to the chorismate synthase family. Requires FMNH2 as cofactor.

It carries out the reaction 5-O-(1-carboxyvinyl)-3-phosphoshikimate = chorismate + phosphate. It participates in metabolic intermediate biosynthesis; chorismate biosynthesis; chorismate from D-erythrose 4-phosphate and phosphoenolpyruvate: step 7/7. Functionally, catalyzes the anti-1,4-elimination of the C-3 phosphate and the C-6 proR hydrogen from 5-enolpyruvylshikimate-3-phosphate (EPSP) to yield chorismate, which is the branch point compound that serves as the starting substrate for the three terminal pathways of aromatic amino acid biosynthesis. This reaction introduces a second double bond into the aromatic ring system. This Methanopyrus kandleri (strain AV19 / DSM 6324 / JCM 9639 / NBRC 100938) protein is Chorismate synthase.